The primary structure comprises 133 residues: Small ribosomal subunit protein uS8 (133 aa).

This sequence belongs to the universal ribosomal protein uS8 family. In terms of assembly, part of the 30S ribosomal subunit. Contacts proteins S5 and S12.

Functionally, one of the primary rRNA binding proteins, it binds directly to 16S rRNA central domain where it helps coordinate assembly of the platform of the 30S subunit. The protein is Small ribosomal subunit protein uS8 of Acaryochloris marina (strain MBIC 11017).